A 60-amino-acid polypeptide reads, in one-letter code: Large ribosomal subunit protein bL32 (60 aa).

This sequence belongs to the bacterial ribosomal protein bL32 family.

The polypeptide is Large ribosomal subunit protein bL32 (rpmF) (Borreliella burgdorferi (strain ATCC 35210 / DSM 4680 / CIP 102532 / B31) (Borrelia burgdorferi)).